The following is a 442-amino-acid chain: Choline monooxygenase, chloroplastic (442 aa).

The N-terminal 58 residues, 1–58, are a transit peptide targeting the chloroplast; it reads MASSASMLINYPTTFCGVRNSSNPNNDQFSDQINIPSSLNNNINISKITSKTNKIIPK. One can recognise a Rieske domain in the interval 123–229; the sequence is WQVAGYSDQI…VAIWGPFVLI (107 aa). [2Fe-2S] cluster contacts are provided by cysteine 165, histidine 167, cysteine 184, and histidine 187. Histidine 290 and histidine 295 together coordinate Fe cation.

This sequence belongs to the choline monooxygenase family. The cofactor is [2Fe-2S] cluster. Requires Fe cation as cofactor. Mg(2+) serves as cofactor.

Its subcellular location is the plastid. It is found in the chloroplast stroma. It carries out the reaction choline + 2 reduced [2Fe-2S]-[ferredoxin] + O2 + 2 H(+) = betaine aldehyde hydrate + 2 oxidized [2Fe-2S]-[ferredoxin] + H2O. Its pathway is amine and polyamine biosynthesis; betaine biosynthesis via choline pathway; betaine aldehyde from choline (monooxygenase route): step 1/1. Functionally, catalyzes the first step of the osmoprotectant glycine betaine synthesis. The polypeptide is Choline monooxygenase, chloroplastic (CMO) (Amaranthus tricolor (Joseph's coat)).